Consider the following 472-residue polypeptide: Pentatricopeptide repeat-containing protein At5g46100 (472 aa).

11 PPR repeats span residues 50–84 (DQSS…NCVV), 85–119 (SEDI…DCDP), 120–154 (SQKA…GLPP), 155–190 (TVAS…GCDP), 191–225 (DSYT…DCAP), 226–260 (TVVT…GIEP), 261–295 (NVFT…GCRP), 296–330 (NMVT…GLKP), 331–365 (DAGL…GITP), 373–406 (HVKT…GISV), and 407–441 (EVET…GCIP).

The protein belongs to the PPR family. P subfamily.

In Arabidopsis thaliana (Mouse-ear cress), this protein is Pentatricopeptide repeat-containing protein At5g46100.